The following is a 126-amino-acid chain: Anti-adapter protein IraD (126 aa).

This sequence belongs to the GpW/Gp25 family. IraD subfamily. As to quaternary structure, interacts with RssB.

It localises to the cytoplasm. Functionally, inhibits RpoS proteolysis by regulating RssB activity, thereby increasing the stability of the sigma stress factor RpoS during oxidative stress. Its effect on RpoS stability is due to its interaction with RssB, which probably blocks the interaction of RssB with RpoS, and the consequent delivery of the RssB-RpoS complex to the ClpXP protein degradation pathway. This is Anti-adapter protein IraD from Salmonella choleraesuis (strain SC-B67).